A 1040-amino-acid polypeptide reads, in one-letter code: Multidrug resistance protein MdtB (1040 aa).

11 helical membrane passes run 15–37 (LFILRPVATTLLMAAILLAGIIG), 345–362 (FELMLAIALVVMIIYLFL), 367–389 (ATIIPGVAVPLSLIGTFAVMVFL), 396–418 (LTLMALTIATGFVVDDAIVVIEN), 438–460 (GEIGFTIISLTFSLIAVLIPLLF), 472–494 (FAVTLAVAILISAVVSLTLTPMM), 535–557 (HPWLTLSVAFATLLLSVMLWITI), 867–889 (VWLIVAAVVAMYIVLGVLYESFI), 909–931 (LIIAGSELDIIAIIGIILLIGIV), 968–990 (ILMTTLAALLGALPLMLSTGVGA), and 1000–1022 (MVGGLLVSQVLTLFTTPVIYLLF).

The protein belongs to the resistance-nodulation-cell division (RND) (TC 2.A.6) family. MdtB subfamily. Part of a tripartite efflux system composed of MdtA, MdtB and MdtC. MdtB forms a heteromultimer with MdtC.

The protein localises to the cell inner membrane. The sequence is that of Multidrug resistance protein MdtB from Salmonella typhi.